We begin with the raw amino-acid sequence, 188 residues long: UPF0301 protein Mmwyl1_0539 (188 aa).

It belongs to the UPF0301 (AlgH) family.

The polypeptide is UPF0301 protein Mmwyl1_0539 (Marinomonas sp. (strain MWYL1)).